Here is a 297-residue protein sequence, read N- to C-terminus: Rhomboid-type serine protease 2 (297 aa).

The next 6 helical transmembrane spans lie at 14-34, 60-80, 98-118, 120-140, 155-175, and 179-199; these read IQHP…IFLL, ISFY…LVAL, IVLN…SIGF, PDEA…YWAI, LVVP…IVIP, and FIGH…YLDV. The active-site Nucleophile is Ser-128. Residue His-182 is part of the active site. Positions 268-297 are disordered; that stretch reads DLEAGTRSRGNSSVDPTTSFPGTGQTLGTQ. A compositionally biased stretch (polar residues) spans 275–297; it reads SRGNSSVDPTTSFPGTGQTLGTQ.

This sequence belongs to the peptidase S54 family.

The protein resides in the golgi apparatus membrane. Its subcellular location is the golgi apparatus. The protein localises to the cis-Golgi network membrane. It catalyses the reaction Cleaves type-1 transmembrane domains using a catalytic dyad composed of serine and histidine that are contributed by different transmembrane domains.. Probable rhomboid-type serine protease that catalyzes intramembrane proteolysis. The sequence is that of Rhomboid-type serine protease 2 (RBD2) from Yarrowia lipolytica (strain CLIB 122 / E 150) (Yeast).